A 663-amino-acid chain; its full sequence is LEAF RUST 10 DISEASE-RESISTANCE LOCUS RECEPTOR-LIKE PROTEIN KINASE-like 1.4 (663 aa).

The first 25 residues, methionine 1–serine 25, serve as a signal peptide directing secretion. Topologically, residues serine 26–glycine 241 are extracellular. Asparagine 36, asparagine 64, asparagine 106, asparagine 137, and asparagine 208 each carry an N-linked (GlcNAc...) asparagine glycan. A helical transmembrane segment spans residues isoleucine 242–isoleucine 262. The Cytoplasmic portion of the chain corresponds to arginine 263–leucine 663. The segment at serine 282–serine 304 is disordered. Over residues arginine 290 to serine 304 the composition is skewed to low complexity. The Protein kinase domain occupies glutamate 334–isoleucine 609. Residues leucine 340 to valine 348 and lysine 362 contribute to the ATP site. The active-site Proton acceptor is the aspartate 458. Residues leucine 637–leucine 663 are disordered. Positions tryptophan 653–leucine 663 are enriched in polar residues.

Belongs to the protein kinase superfamily. Ser/Thr protein kinase family.

The protein resides in the cell membrane. The catalysed reaction is L-seryl-[protein] + ATP = O-phospho-L-seryl-[protein] + ADP + H(+). It carries out the reaction L-threonyl-[protein] + ATP = O-phospho-L-threonyl-[protein] + ADP + H(+). The protein is LEAF RUST 10 DISEASE-RESISTANCE LOCUS RECEPTOR-LIKE PROTEIN KINASE-like 1.4 of Arabidopsis thaliana (Mouse-ear cress).